The following is a 41-amino-acid chain: Large ribosomal subunit protein bL36B (41 aa).

Belongs to the bacterial ribosomal protein bL36 family.

The sequence is that of Large ribosomal subunit protein bL36B from Neisseria meningitidis serogroup C (strain 053442).